Consider the following 66-residue polypeptide: Beta-defensin 13 (66 aa).

An N-terminal signal peptide occupies residues methionine 1–glycine 22. Cystine bridges form between cysteine 30–cysteine 59, cysteine 37–cysteine 51, and cysteine 41–cysteine 60.

Belongs to the beta-defensin family.

It localises to the secreted. Functionally, has antibacterial activity. In Rattus norvegicus (Rat), this protein is Beta-defensin 13 (Defb13).